Here is a 382-residue protein sequence, read N- to C-terminus: Gap junction alpha-1 protein (382 aa).

The Cytoplasmic portion of the chain corresponds to 2 to 23; sequence GDWSALGKLLDKVQAYSTAGGK. S5 is modified (phosphoserine). The helical transmembrane segment at 24–44 threads the bilayer; the sequence is VWLSVLFIFRILLLGTAVESA. At 45-76 the chain is on the extracellular side; the sequence is WGDEQSAFRCNTQQPGCENVCYDKSFPISHVR. Disulfide bonds link C54-C192 and C187-C198. Residues 77 to 97 form a helical membrane-spanning segment; the sequence is FWVLQIIFVSVPTLLYLAHVF. The Cytoplasmic segment spans residues 98 to 155; the sequence is YVMRKEEKLNKKEEELKVAQTDGVNVEMHLKQIEIKKFKYGIEEHGKVKMRGGLLRTY. Residue K144 forms a Glycyl lysine isopeptide (Lys-Gly) (interchain with G-Cter in SUMO) linkage. The helical transmembrane segment at 156 to 176 threads the bilayer; that stretch reads IISILFKSVFEVAFLLIQWYI. The Extracellular portion of the chain corresponds to 177-207; sequence YGFSLSAVYTCKRDPCPHQVDCFLSRPTEKT. A helical membrane pass occupies residues 208 to 228; that stretch reads IFIIFMLVVSLVSLALNIIEL. At 229 to 382 the chain is on the cytoplasmic side; it reads FYVFFKGVKD…SRPRPDDLEI (154 aa). K237 is covalently cross-linked (Glycyl lysine isopeptide (Lys-Gly) (interchain with G-Cter in SUMO)). Positions 244–382 are interaction with NOV; sequence SDPYHATTGP…SRPRPDDLEI (139 aa). At Y247 the chain carries Phosphotyrosine. 3 positions are modified to phosphoserine: S255, S257, and S262. The interval 264–382 is interaction with UBQLN4; that stretch reads KYAYFNGCSS…SRPRPDDLEI (119 aa). C271 carries the post-translational modification S-nitrosocysteine. Position 275 is a phosphothreonine (T275). Phosphoserine is present on residues S306 and S314. Residues 317-332 are compositionally biased toward polar residues; that stretch reads QNRMGQAGSTISNSHA. The disordered stretch occupies residues 317–382; sequence QNRMGQAGST…SRPRPDDLEI (66 aa). At S325 the chain carries Phosphoserine; by CK1. T326 is subject to Phosphothreonine. Phosphoserine; by CK1 occurs at positions 328 and 330. S344 and S365 each carry phosphoserine. Over residues 362 to 374 the composition is skewed to low complexity; it reads RPSSRASSRASSR. S368 bears the Phosphoserine; by PKC/PRKCG and PKC/PRKCD mark. Phosphoserine occurs at positions 369 and 373.

Belongs to the connexin family. Alpha-type (group II) subfamily. A connexon is composed of a hexamer of connexins. Interacts with SGSM3. Interacts with RIC1/CIP150. Interacts with CNST and CSNK1D. Interacts (via C-terminus) with TJP1. Interacts (via C-terminus) with SRC (via SH3 domain). Interacts (not ubiquitinated) with UBQLN4 (via UBA domain). Interacts with NOV. Interacts with TMEM65. Interacts with ANK3/ANKG and PKP2. Phosphorylation at Ser-325, Ser-328 and Ser-330 by CK1 modulates gap junction assembly. Phosphorylated at Ser-368 by PRKCG; phosphorylation induces disassembly of gap junction plaques and inhibition of gap junction activity. Phosphorylation at Ser-368 by PRKCD triggers its internalization into small vesicles leading to proteasome-mediated degradation. Post-translationally, sumoylated with SUMO1, SUMO2 and SUMO3, which may regulate the level of functional Cx43 gap junctions at the plasma membrane. May be desumoylated by SENP1 or SENP2. In terms of processing, S-nitrosylation at Cys-271 is enriched at the muscle endothelial gap junction in arteries, it augments channel permeability and may regulate of smooth muscle cell to endothelial cell communication. Acetylated in the developing cortex; leading to delocalization from the cell membrane.

It localises to the cell membrane. The protein localises to the cell junction. It is found in the gap junction. Its subcellular location is the endoplasmic reticulum. In terms of biological role, gap junction protein that acts as a regulator of bladder capacity. A gap junction consists of a cluster of closely packed pairs of transmembrane channels, the connexons, through which materials of low MW diffuse from one cell to a neighboring cell. May play a critical role in the physiology of hearing by participating in the recycling of potassium to the cochlear endolymph. Negative regulator of bladder functional capacity: acts by enhancing intercellular electrical and chemical transmission, thus sensitizing bladder muscles to cholinergic neural stimuli and causing them to contract. May play a role in cell growth inhibition through the regulation of NOV expression and localization. Plays an essential role in gap junction communication in the ventricles. The polypeptide is Gap junction alpha-1 protein (GJA1) (Ursus americanus (American black bear)).